We begin with the raw amino-acid sequence, 434 residues long: Enolase (434 aa).

Gln-165 provides a ligand contact to (2R)-2-phosphoglycerate. Glu-207 (proton donor) is an active-site residue. Asp-244, Glu-291, and Asp-318 together coordinate Mg(2+). Lys-343, Arg-372, Ser-373, and Lys-394 together coordinate (2R)-2-phosphoglycerate. The active-site Proton acceptor is the Lys-343.

This sequence belongs to the enolase family. Mg(2+) is required as a cofactor.

It localises to the cytoplasm. Its subcellular location is the secreted. The protein resides in the cell surface. It carries out the reaction (2R)-2-phosphoglycerate = phosphoenolpyruvate + H2O. It functions in the pathway carbohydrate degradation; glycolysis; pyruvate from D-glyceraldehyde 3-phosphate: step 4/5. In terms of biological role, catalyzes the reversible conversion of 2-phosphoglycerate (2-PG) into phosphoenolpyruvate (PEP). It is essential for the degradation of carbohydrates via glycolysis. This Staphylococcus epidermidis (strain ATCC 35984 / DSM 28319 / BCRC 17069 / CCUG 31568 / BM 3577 / RP62A) protein is Enolase.